The chain runs to 304 residues: Non-specific ribonucleoside hydrolase RihC (304 aa).

Residue H233 is part of the active site.

The protein belongs to the IUNH family. RihC subfamily.

Hydrolyzes both purine and pyrimidine ribonucleosides with a broad-substrate specificity. The sequence is that of Non-specific ribonucleoside hydrolase RihC from Escherichia coli O7:K1 (strain IAI39 / ExPEC).